Consider the following 178-residue polypeptide: Ribulose bisphosphate carboxylase small subunit, chloroplastic (178 aa).

The transit peptide at 1–54 (MALISSAAVTTINRAPVQANLATPFTGLKSSAGFPVTKKNNDITSITSNGSRVN) directs the protein to the chloroplast.

It belongs to the RuBisCO small chain family. As to quaternary structure, heterohexadecamer of 8 large and 8 small subunits.

The protein localises to the plastid. The protein resides in the chloroplast. RuBisCO catalyzes two reactions: the carboxylation of D-ribulose 1,5-bisphosphate, the primary event in carbon dioxide fixation, as well as the oxidative fragmentation of the pentose substrate. Both reactions occur simultaneously and in competition at the same active site. Although the small subunit is not catalytic it is essential for maximal activity. The polypeptide is Ribulose bisphosphate carboxylase small subunit, chloroplastic (Trifolium repens (Creeping white clover)).